A 141-amino-acid polypeptide reads, in one-letter code: Large ribosomal subunit protein uL16 (141 aa).

Belongs to the universal ribosomal protein uL16 family. Part of the 50S ribosomal subunit.

Functionally, binds 23S rRNA and is also seen to make contacts with the A and possibly P site tRNAs. This chain is Large ribosomal subunit protein uL16, found in Hydrogenobaculum sp. (strain Y04AAS1).